Here is a 495-residue protein sequence, read N- to C-terminus: Protein painting of fourth (495 aa).

The tract at residues 1-51 (MDSKRAALESGDGPDAKRLDTTDDQDKEASGGDGSQVMLAKHVAPYTGHGC) is disordered. Positions 215–289 (CSLYVGNIPF…RTLTVRYRRL (75 aa)) constitute an RRM domain. A compositionally biased stretch (low complexity) spans 332–342 (ISDSDNCSDSS). Disordered regions lie at residues 332 to 358 (ISDSDNCSDSSGNGKEDGKRKKKINEQ), 432 to 451 (PVPATKPTTQAQDDSQKKAK), and 461 to 495 (GPFRRGTSAMKTADEYEKDDRLEELYAQLERDPDP). Basic and acidic residues predominate over residues 345–358 (GKEDGKRKKKINEQ). A Bipartite nuclear localization signal motif is present at residues 351-367 (RKKKINEQEREIEKLKR). Over residues 472 to 495 (TADEYEKDDRLEELYAQLERDPDP) the composition is skewed to basic and acidic residues.

As to quaternary structure, interacts with Zeste. In terms of tissue distribution, weakly expressed in embryos. Expression increases during larval and pupal stages. In adults, it is predominantly expressed in males, while it is weakly expressed in females.

Its subcellular location is the nucleus. It is found in the chromosome. Probable RNA-binding protein that specifically binds to the fourth chromosome and may bind an RNA that spreads the fourth chromosome. May be a reminiscence of X chromosome dosage compensation of ancestral Drosophila species in which the X and the fourth chromosomes are one single chromosome. This chain is Protein painting of fourth (Pof), found in Drosophila melanogaster (Fruit fly).